Reading from the N-terminus, the 399-residue chain is Glutathione S-transferase LANCL1 (399 aa).

Position 2 is an N-acetylalanine (alanine 2). Lysine 142 is modified (N6-acetyllysine). Cysteine 276 contacts Zn(2+). Lysine 317 contributes to the glutathione binding site. Positions 322 and 323 each coordinate Zn(2+). Residue 364-367 (RTPD) coordinates glutathione.

Belongs to the LanC-like protein family. In terms of assembly, interacts with the C-terminal of STOM. Interacts with the EPS8 SH3 domain. Interaction with EPS8 is inhibited by glutathione binding. Expressed in brain.

It is found in the cytoplasm. The protein resides in the cell membrane. It carries out the reaction RX + glutathione = an S-substituted glutathione + a halide anion + H(+). The enzyme catalyses 1-chloro-2,4-dinitrobenzene + glutathione = 2,4-dinitrophenyl-S-glutathione + chloride + H(+). Functionally, functions as a glutathione transferase. Catalyzes conjugation of the glutathione (GSH) to artificial substrates 1-chloro-2,4-dinitrobenzene (CDNB) and p-nitrophenyl acetate. Mitigates neuronal oxidative stress during normal postnatal development and in response to oxidative stresses probably through GSH antioxidant defense mechanism. May play a role in EPS8 signaling. Binds glutathione. The sequence is that of Glutathione S-transferase LANCL1 (LANCL1) from Bos taurus (Bovine).